The following is a 576-amino-acid chain: Putative export ATP-binding/permease protein RT0691 (576 aa).

The region spanning leucine 20–leucine 303 is the ABC transmembrane type-1 domain. The next 6 membrane-spanning stretches (helical) occupy residues isoleucine 21–phenylalanine 41, isoleucine 61–phenylalanine 81, phenylalanine 135–phenylalanine 155, phenylalanine 158–phenylalanine 178, alanine 242–isoleucine 262, and isoleucine 277–leucine 297. The ABC transporter domain occupies isoleucine 336–glutamate 572. Residue glycine 371 to serine 378 coordinates ATP.

The protein belongs to the ABC transporter superfamily. Homodimer.

It localises to the cell inner membrane. Its function is as follows. Part of an ABC transporter complex. Transmembrane domains (TMD) form a pore in the inner membrane and the ATP-binding domain (NBD) is responsible for energy generation. In Rickettsia typhi (strain ATCC VR-144 / Wilmington), this protein is Putative export ATP-binding/permease protein RT0691.